Here is a 355-residue protein sequence, read N- to C-terminus: MSGQPKRLMVMAGGTGGHVFPGLAVAHHLMSQGWQVRWLGTADRMEADLVPKHGIDIDFIRISGLRGKGVKALLAAPLRIFNAWRQARAIMKRFKPDVVLGMGGYVSGPGGLAAWSLGIPVVLHEQNGIAGLTNQWLAKIATTVMQAFPGAFPNAEVVGNPVRTDVLALPLPQVRLAGRDGPIRVLVVGGSQGARVLNQTMPQVAARLGDTVTIWHQSGKGVQHTVEQAYAGVGQPQHKVTEFIDDMAAAYAWADVVVCRSGALTVSEIAAAGLPAIFVPFQHKDRQQYWNALPLENAGAAKIFEQPQFTVEAVADTLAGWSREALLTMAERARAVSIPDATERVASEVSRVART.

Residues 15-17, Asn-127, Arg-163, Ser-191, Ile-244, 263-268, and Gln-288 contribute to the UDP-N-acetyl-alpha-D-glucosamine site; these read TGG and ALTVSE.

Belongs to the glycosyltransferase 28 family. MurG subfamily.

The protein localises to the cell inner membrane. The enzyme catalyses di-trans,octa-cis-undecaprenyl diphospho-N-acetyl-alpha-D-muramoyl-L-alanyl-D-glutamyl-meso-2,6-diaminopimeloyl-D-alanyl-D-alanine + UDP-N-acetyl-alpha-D-glucosamine = di-trans,octa-cis-undecaprenyl diphospho-[N-acetyl-alpha-D-glucosaminyl-(1-&gt;4)]-N-acetyl-alpha-D-muramoyl-L-alanyl-D-glutamyl-meso-2,6-diaminopimeloyl-D-alanyl-D-alanine + UDP + H(+). It participates in cell wall biogenesis; peptidoglycan biosynthesis. Cell wall formation. Catalyzes the transfer of a GlcNAc subunit on undecaprenyl-pyrophosphoryl-MurNAc-pentapeptide (lipid intermediate I) to form undecaprenyl-pyrophosphoryl-MurNAc-(pentapeptide)GlcNAc (lipid intermediate II). The chain is UDP-N-acetylglucosamine--N-acetylmuramyl-(pentapeptide) pyrophosphoryl-undecaprenol N-acetylglucosamine transferase from Salmonella enteritidis PT4 (strain P125109).